The chain runs to 193 residues: Holliday junction branch migration complex subunit RuvA (193 aa).

Positions 1–64 (MIGRIAGVLL…EDAHLLYGFG (64 aa)) are domain I. The segment at 65–139 (TAEERSTFRE…GKIGADLGAM (75 aa)) is domain II. Positions 139–143 (MAGAA) are flexible linker. The interval 144 to 193 (SASDHASDILNALLALGYSEKEALAAVKNVPAGTGVSEGIKLALKALSKG) is domain III.

It belongs to the RuvA family. Homotetramer. Forms an RuvA(8)-RuvB(12)-Holliday junction (HJ) complex. HJ DNA is sandwiched between 2 RuvA tetramers; dsDNA enters through RuvA and exits via RuvB. An RuvB hexamer assembles on each DNA strand where it exits the tetramer. Each RuvB hexamer is contacted by two RuvA subunits (via domain III) on 2 adjacent RuvB subunits; this complex drives branch migration. In the full resolvosome a probable DNA-RuvA(4)-RuvB(12)-RuvC(2) complex forms which resolves the HJ.

It localises to the cytoplasm. In terms of biological role, the RuvA-RuvB-RuvC complex processes Holliday junction (HJ) DNA during genetic recombination and DNA repair, while the RuvA-RuvB complex plays an important role in the rescue of blocked DNA replication forks via replication fork reversal (RFR). RuvA specifically binds to HJ cruciform DNA, conferring on it an open structure. The RuvB hexamer acts as an ATP-dependent pump, pulling dsDNA into and through the RuvAB complex. HJ branch migration allows RuvC to scan DNA until it finds its consensus sequence, where it cleaves and resolves the cruciform DNA. In Paraburkholderia xenovorans (strain LB400), this protein is Holliday junction branch migration complex subunit RuvA.